The primary structure comprises 232 residues: Esterase YpfH (232 aa).

Catalysis depends on charge relay system residues S111, D159, and H191.

This sequence belongs to the AB hydrolase superfamily. AB hydrolase 2 family.

Functionally, displays esterase activity toward palmitoyl-CoA and pNP-butyrate. This is Esterase YpfH (ypfH) from Escherichia coli (strain K12).